We begin with the raw amino-acid sequence, 475 residues long: Aspartyl/glutamyl-tRNA(Asn/Gln) amidotransferase subunit B (475 aa).

It belongs to the GatB/GatE family. GatB subfamily. Heterotrimer of A, B and C subunits.

It carries out the reaction L-glutamyl-tRNA(Gln) + L-glutamine + ATP + H2O = L-glutaminyl-tRNA(Gln) + L-glutamate + ADP + phosphate + H(+). The catalysed reaction is L-aspartyl-tRNA(Asn) + L-glutamine + ATP + H2O = L-asparaginyl-tRNA(Asn) + L-glutamate + ADP + phosphate + 2 H(+). In terms of biological role, allows the formation of correctly charged Asn-tRNA(Asn) or Gln-tRNA(Gln) through the transamidation of misacylated Asp-tRNA(Asn) or Glu-tRNA(Gln) in organisms which lack either or both of asparaginyl-tRNA or glutaminyl-tRNA synthetases. The reaction takes place in the presence of glutamine and ATP through an activated phospho-Asp-tRNA(Asn) or phospho-Glu-tRNA(Gln). The sequence is that of Aspartyl/glutamyl-tRNA(Asn/Gln) amidotransferase subunit B from Staphylococcus epidermidis (strain ATCC 12228 / FDA PCI 1200).